The primary structure comprises 138 residues: Large ribosomal subunit protein uL16 (138 aa).

It belongs to the universal ribosomal protein uL16 family. As to quaternary structure, part of the 50S ribosomal subunit.

In terms of biological role, binds 23S rRNA and is also seen to make contacts with the A and possibly P site tRNAs. The protein is Large ribosomal subunit protein uL16 of Mycoplasmoides gallisepticum (strain R(low / passage 15 / clone 2)) (Mycoplasma gallisepticum).